Reading from the N-terminus, the 402-residue chain is Mannonate dehydratase (402 aa).

This sequence belongs to the mannonate dehydratase family. Fe(2+) serves as cofactor. It depends on Mn(2+) as a cofactor.

The enzyme catalyses D-mannonate = 2-dehydro-3-deoxy-D-gluconate + H2O. It functions in the pathway carbohydrate metabolism; pentose and glucuronate interconversion. Functionally, catalyzes the dehydration of D-mannonate. The sequence is that of Mannonate dehydratase from Rhizobium meliloti (strain 1021) (Ensifer meliloti).